Reading from the N-terminus, the 292-residue chain is Transforming growth factor-beta receptor type 3-like protein (292 aa).

The N-terminal stretch at 1 to 16 (MLGTVLLLALLPGITT) is a signal peptide. Positions 17–170 (LPSGPPAPPF…APAPLTPPPP (154 aa)) constitute a ZP; truncated domain. Residues 17 to 244 (LPSGPPAPPF…PAPAALEPAP (228 aa)) lie on the Extracellular side of the membrane. A disulfide bond links Cys-85 and Cys-147. The tract at residues 160–236 (RAPAPLTPPP…AVRPEPPAPA (77 aa)) is disordered. Pro residues-rich tracts occupy residues 164-175 (PLTPPPPPPPSR) and 213-222 (PRPPPRPPKS). Residues 245 to 265 (VVALVLAAFVLGAALAAGLGL) traverse the membrane as a helical segment. Over 266 to 292 (VCAHSAPHAPGPPARASPSGPQPRRSQ) the chain is Cytoplasmic. The segment at 273 to 292 (HAPGPPARASPSGPQPRRSQ) is disordered. A compositionally biased stretch (low complexity) spans 281 to 292 (ASPSGPQPRRSQ).

Glycosylated. Expressed in pituitary gland gonadotrope cells.

The protein resides in the cell membrane. In terms of biological role, expressed in gonadotrope cells, acts as an inhibin B coreceptor and regulates follicle-stimulating hormone (FSH) levels and female fertility. The polypeptide is Transforming growth factor-beta receptor type 3-like protein (Homo sapiens (Human)).